A 507-amino-acid chain; its full sequence is ATP synthase subunit alpha, chloroplastic (507 aa).

ATP is bound at residue 170-177 (GDRQTGKT).

The protein belongs to the ATPase alpha/beta chains family. As to quaternary structure, F-type ATPases have 2 components, CF(1) - the catalytic core - and CF(0) - the membrane proton channel. CF(1) has five subunits: alpha(3), beta(3), gamma(1), delta(1), epsilon(1). CF(0) has four main subunits: a, b, b' and c.

It localises to the plastid. It is found in the chloroplast thylakoid membrane. The enzyme catalyses ATP + H2O + 4 H(+)(in) = ADP + phosphate + 5 H(+)(out). Functionally, produces ATP from ADP in the presence of a proton gradient across the membrane. The alpha chain is a regulatory subunit. The sequence is that of ATP synthase subunit alpha, chloroplastic from Physcomitrium patens (Spreading-leaved earth moss).